Consider the following 291-residue polypeptide: Protease HtpX (291 aa).

A run of 2 helical transmembrane segments spans residues 4-24 (IALF…VLNI) and 36-56 (LSGL…ISLM). H143 provides a ligand contact to Zn(2+). E144 is a catalytic residue. H147 is a binding site for Zn(2+). 2 helical membrane-spanning segments follow: residues 151–171 (GDMI…IFLS) and 199–219 (FIVS…LTMW). A Zn(2+)-binding site is contributed by E225.

Belongs to the peptidase M48B family. The cofactor is Zn(2+).

It is found in the cell inner membrane. The chain is Protease HtpX from Aliivibrio fischeri (strain MJ11) (Vibrio fischeri).